Consider the following 487-residue polypeptide: Virulence sensor histidine kinase PhoQ (487 aa).

At 1–16 the chain is on the cytoplasmic side; sequence MNKFARHFLPLSLRVR. A helical transmembrane segment spans residues 17 to 37; the sequence is FLLATAGVVLVLSLAYGIVAL. Topologically, residues 38–193 are periplasmic; it reads VGYSVSFDKT…ELKRSYMVWS (156 aa). A divalent metal cation contacts are provided by Asp-151 and Asp-152. A helical transmembrane segment spans residues 194 to 214; sequence WFVYVLAANLLLVIPLLWIAA. The region spanning 215–266 is the HAMP domain; sequence WWSLRPIEALAREVRELEDHHREMLNPETTRELTSLVRNLNQLLKSERERYN. At 215-487 the chain is on the cytoplasmic side; that stretch reads WWSLRPIEAL…GRQHPTQKEE (273 aa). Residues 274–481 enclose the Histidine kinase domain; it reads DLTHSLKTPL…RMEVVFGRQH (208 aa). His-277 bears the Phosphohistidine; by autocatalysis mark. Asn-386 lines the Mg(2+) pocket. ATP is bound by residues 386-394, 416-421, and 435-447; these read NVLDNACKY, DDGPGI, and RADT…GVGL. Gln-443 is a Mg(2+) binding site.

In terms of assembly, homodimer.

It is found in the cell inner membrane. The enzyme catalyses ATP + protein L-histidine = ADP + protein N-phospho-L-histidine.. Member of the two-component regulatory system PhoP/PhoQ which regulates the expression of genes involved in virulence and resistance to host defense antimicrobial peptides. In low periplasmic Mg(2+), PhoQ functions as a membrane-associated protein kinase that undergoes autophosphorylation and subsequently transfers the phosphate to PhoP, which results in the expression of PhoP-activated genes (PAG) and repression of PhoP-repressed genes (PRG). In high periplasmic Mg(2+), acts as a protein phosphatase that dephosphorylates phospho-PhoP, which results in the repression of PAG and may lead to expression of some PRG. Promotes intramacrophage survival of S.typhi. Is required to enhance bacterial resistance to bile in the human intestinal cells. This Salmonella typhi protein is Virulence sensor histidine kinase PhoQ (phoQ).